We begin with the raw amino-acid sequence, 223 residues long: Deoxyribose-phosphate aldolase (223 aa).

The Proton donor/acceptor role is filled by Asp-91. The active-site Schiff-base intermediate with acetaldehyde is Lys-154. The active-site Proton donor/acceptor is the Lys-183.

This sequence belongs to the DeoC/FbaB aldolase family. DeoC type 1 subfamily.

The protein resides in the cytoplasm. The catalysed reaction is 2-deoxy-D-ribose 5-phosphate = D-glyceraldehyde 3-phosphate + acetaldehyde. Its pathway is carbohydrate degradation; 2-deoxy-D-ribose 1-phosphate degradation; D-glyceraldehyde 3-phosphate and acetaldehyde from 2-deoxy-alpha-D-ribose 1-phosphate: step 2/2. Its function is as follows. Catalyzes a reversible aldol reaction between acetaldehyde and D-glyceraldehyde 3-phosphate to generate 2-deoxy-D-ribose 5-phosphate. The polypeptide is Deoxyribose-phosphate aldolase (Lysinibacillus sphaericus (strain C3-41)).